Here is a 215-residue protein sequence, read N- to C-terminus: Protein slowmo (215 aa).

The PRELI/MSF1 domain maps to 1–170; sequence MKIWTSEHIF…VIGLINTEVK (170 aa).

The protein belongs to the slowmo family. Expressed in specific tissues such as the developing central nervous system (CNS) and both the male and female germline. In the CNS, it is restricted in a subset of cells during embryogenesis and early larval development. In embryos, it is also expressed in salivary glands. In the testis, expressed in somatic cyst cells throughout the distal region where the mitotic cysts develop, extending through to meiotic cysts.

Its subcellular location is the mitochondrion. Functionally, required to regulate peristaltic movement and also for germline proliferation in males and females. The protein is Protein slowmo (slmo) of Drosophila melanogaster (Fruit fly).